Consider the following 315-residue polypeptide: T cell receptor beta chain MC.7.G5 (315 aa).

The first 21 residues, 1–21 (MTIRLLCYMGFYFLGAGLMEA), serve as a signal peptide directing secretion. Residues 22–114 (DIYQTPRYLV…TSQYLCASSE (93 aa)) enclose the Ig-like V-type domain. A t cell receptor beta variable 25-1 region spans residues 22–114 (DIYQTPRYLV…TSQYLCASSE (93 aa)). C42 and C110 are disulfide-bonded. The tract at residues 46–50 (MGHDK) is CDR1. The CDR2 stretch occupies residues 68-73 (SYGVNS). Residue N72 is glycosylated (N-linked (GlcNAc...) asparagine). The tract at residues 110–127 (CASSEARGLAEFTDTQYF) is CDR3. Residues 122–136 (TDTQYFGPGTRLTVL) are t cell receptor beta joining 2-3. Residues 138 to 315 (DLKNVFPPEV…AMVKRKDSRG (178 aa)) are t cell receptor beta constant 2. The 110-residue stretch at 145–254 (PEVAVFEPSE…WTQDRAKPVT (110 aa)) folds into the Ig-like C1-type domain. Cysteines 167 and 232 form a disulfide. N206 carries N-linked (GlcNAc...) asparagine glycosylation. Residues 267-281 (CGFTSESYQQGVLSA) are connecting peptide. The chain crosses the membrane as a helical span at residues 282 to 304 (TILYEILLGKATLYAVLVSALVL). Topologically, residues 305 to 315 (MAMVKRKDSRG) are cytoplasmic.

As to quaternary structure, disulfide-linked heterodimer with TRAV38-2DV8*01J31*01C*01 alpha chain. The alpha-beta TR associates with the transmembrane signaling CD3 coreceptor proteins to form the TR-CD3 (TCR). The assembly of alpha-beta TR heterodimers with CD3 occurs in the endoplasmic reticulum where a single alpha-beta TR heterodimer associates with one CD3D-CD3E heterodimer, one CD3G-CD3E heterodimer and one CD247 homodimer forming a stable octameric structure. CD3D-CD3E and CD3G-CD3E heterodimers preferentially associate with TR alpha and TR beta chains (via TM domain), respectively. The association of the CD247 homodimer is the last step of TCR assembly in the endoplasmic reticulum and is required for transport to the cell surface. Expressed in MR1-restricted CD8-positive T cells.

The protein resides in the cell membrane. Functionally, the beta chain of TRAV38-2DV8*01J31*01C*01/TRBV25-1*01J2S3*01C2*01 alpha-beta T cell receptor (TR) clonotype that displays pan-cancer cell recognition via the invariant MR1 molecule. On CD8-positive T cell clone MC.7.G5, likely recognizes tumor-specific or -associated metabolite(s) essential for cancer cell survival, triggering killing of many cancer cell types including lung, melanoma, leukemia, colon, breast, prostate, bone and ovarian cancer cells. Mediates cancer cell cytotoxicity in an HLA-independent manner. Has no reactivity to healthy cells even stressed or infected by bacteria. Antigen recognition initiates TR-CD3 clustering on the cell surface and intracellular activation of LCK that phosphorylates the ITAM motifs of CD3G, CD3D, CD3E and CD247 enabling the recruitment of ZAP70. In turn, ZAP70 phosphorylates LAT, which recruits numerous signaling molecules to form the LAT signalosome. The LAT signalosome propagates signal branching to three major signaling pathways, the calcium, the mitogen-activated protein kinase (MAPK) kinase and the nuclear factor NF-kappa-B (NF-kB) pathways, leading to the mobilization of transcription factors that are critical for gene expression and essential for T cell differentiation into effector/memory T cells. This chain is T cell receptor beta chain MC.7.G5, found in Homo sapiens (Human).